The following is a 266-amino-acid chain: 3-deoxy-manno-octulosonate cytidylyltransferase (266 aa).

This sequence belongs to the KdsB family.

It localises to the cytoplasm. It carries out the reaction 3-deoxy-alpha-D-manno-oct-2-ulosonate + CTP = CMP-3-deoxy-beta-D-manno-octulosonate + diphosphate. It functions in the pathway nucleotide-sugar biosynthesis; CMP-3-deoxy-D-manno-octulosonate biosynthesis; CMP-3-deoxy-D-manno-octulosonate from 3-deoxy-D-manno-octulosonate and CTP: step 1/1. The protein operates within bacterial outer membrane biogenesis; lipopolysaccharide biosynthesis. Activates KDO (a required 8-carbon sugar) for incorporation into bacterial lipopolysaccharide in Gram-negative bacteria. In Paraburkholderia xenovorans (strain LB400), this protein is 3-deoxy-manno-octulosonate cytidylyltransferase.